Reading from the N-terminus, the 312-residue chain is Phospho-N-acetylmuramoyl-pentapeptide-transferase (312 aa).

Transmembrane regions (helical) follow at residues 1–21 (MMVV…HYSK), 48–68 (GVAF…FGGI), 76–96 (EVMI…DDFL), 115–135 (FPLQ…LASH), 140–160 (GFMS…FVMV), 165–185 (AFNF…IVLL), 214–234 (VFMG…AYAL), 238–258 (VWLL…VVIQ), and 289–309 (VTLR…WLMG).

It belongs to the glycosyltransferase 4 family. MraY subfamily. Mg(2+) is required as a cofactor.

Its subcellular location is the cell membrane. It catalyses the reaction UDP-N-acetyl-alpha-D-muramoyl-L-alanyl-gamma-D-glutamyl-meso-2,6-diaminopimeloyl-D-alanyl-D-alanine + di-trans,octa-cis-undecaprenyl phosphate = di-trans,octa-cis-undecaprenyl diphospho-N-acetyl-alpha-D-muramoyl-L-alanyl-D-glutamyl-meso-2,6-diaminopimeloyl-D-alanyl-D-alanine + UMP. It functions in the pathway cell wall biogenesis; peptidoglycan biosynthesis. In terms of biological role, catalyzes the initial step of the lipid cycle reactions in the biosynthesis of the cell wall peptidoglycan: transfers peptidoglycan precursor phospho-MurNAc-pentapeptide from UDP-MurNAc-pentapeptide onto the lipid carrier undecaprenyl phosphate, yielding undecaprenyl-pyrophosphoryl-MurNAc-pentapeptide, known as lipid I. The chain is Phospho-N-acetylmuramoyl-pentapeptide-transferase from Deinococcus radiodurans (strain ATCC 13939 / DSM 20539 / JCM 16871 / CCUG 27074 / LMG 4051 / NBRC 15346 / NCIMB 9279 / VKM B-1422 / R1).